We begin with the raw amino-acid sequence, 564 residues long: Dihydroxy-acid dehydratase (564 aa).

Cys-55 serves as a coordination point for [2Fe-2S] cluster. Asp-87 serves as a coordination point for Mg(2+). Position 128 (Cys-128) interacts with [2Fe-2S] cluster. Residues Asp-129 and Lys-130 each contribute to the Mg(2+) site. Lys-130 carries the post-translational modification N6-carboxylysine. Residue Cys-200 coordinates [2Fe-2S] cluster. Glu-452 is a binding site for Mg(2+). The active-site Proton acceptor is Ser-478.

It belongs to the IlvD/Edd family. As to quaternary structure, homodimer. It depends on [2Fe-2S] cluster as a cofactor. Requires Mg(2+) as cofactor.

It carries out the reaction (2R)-2,3-dihydroxy-3-methylbutanoate = 3-methyl-2-oxobutanoate + H2O. The enzyme catalyses (2R,3R)-2,3-dihydroxy-3-methylpentanoate = (S)-3-methyl-2-oxopentanoate + H2O. The protein operates within amino-acid biosynthesis; L-isoleucine biosynthesis; L-isoleucine from 2-oxobutanoate: step 3/4. It functions in the pathway amino-acid biosynthesis; L-valine biosynthesis; L-valine from pyruvate: step 3/4. Functionally, functions in the biosynthesis of branched-chain amino acids. Catalyzes the dehydration of (2R,3R)-2,3-dihydroxy-3-methylpentanoate (2,3-dihydroxy-3-methylvalerate) into 2-oxo-3-methylpentanoate (2-oxo-3-methylvalerate) and of (2R)-2,3-dihydroxy-3-methylbutanoate (2,3-dihydroxyisovalerate) into 2-oxo-3-methylbutanoate (2-oxoisovalerate), the penultimate precursor to L-isoleucine and L-valine, respectively. In Albidiferax ferrireducens (strain ATCC BAA-621 / DSM 15236 / T118) (Rhodoferax ferrireducens), this protein is Dihydroxy-acid dehydratase.